The following is an 88-amino-acid chain: Small ribosomal subunit protein bS16 (88 aa).

Belongs to the bacterial ribosomal protein bS16 family.

The polypeptide is Small ribosomal subunit protein bS16 (Geotalea daltonii (strain DSM 22248 / JCM 15807 / FRC-32) (Geobacter daltonii)).